A 481-amino-acid chain; its full sequence is Cytochrome c oxidase subunit 1 (481 aa).

Residues Ile-22–Ile-42 traverse the membrane as a helical segment. Residues Glu-45 and Gly-50 each coordinate Ca(2+). The next 8 membrane-spanning stretches (helical) occupy residues Leu-64–Gly-84, Ser-109–Gly-129, Phe-151–Ile-171, Ile-194–Met-214, Leu-240–Ile-260, Met-278–Val-298, Tyr-309–Val-329, and Leu-343–Val-363. His-69 provides a ligand contact to Fe(II)-heme a. His-246 lines the Cu cation pocket. A cross-link (1'-histidyl-3'-tyrosine (His-Tyr)) is located at residues His-246–Tyr-250. Tyr-250 lines the O2 pocket. Positions 374 and 375 each coordinate Mg(2+). Position 382 (His-382) interacts with heme a3. 2 helical membrane-spanning segments follow: residues His-382–Ile-402 and Ile-420–Phe-440. His-384 is a binding site for Fe(II)-heme a. Pro-448 contributes to the Ca(2+) binding site. The chain crosses the membrane as a helical span at residues Phe-459 to Ile-479.

The protein belongs to the heme-copper respiratory oxidase family. As to quaternary structure, component of the cytochrome c oxidase (complex IV, CIV), a multisubunit enzyme composed of a catalytic core of 3 subunits and several supernumerary subunits. The complex exists as a monomer or a dimer and forms supercomplexes (SCs) in the inner mitochondrial membrane with ubiquinol-cytochrome c oxidoreductase (cytochrome b-c1 complex, complex III, CIII). Heme serves as cofactor. It depends on Cu cation as a cofactor.

Its subcellular location is the mitochondrion inner membrane. The catalysed reaction is 4 Fe(II)-[cytochrome c] + O2 + 8 H(+)(in) = 4 Fe(III)-[cytochrome c] + 2 H2O + 4 H(+)(out). It participates in energy metabolism; oxidative phosphorylation. Functionally, component of the cytochrome c oxidase, the last enzyme in the mitochondrial electron transport chain which drives oxidative phosphorylation. The respiratory chain contains 3 multisubunit complexes succinate dehydrogenase (complex II, CII), ubiquinol-cytochrome c oxidoreductase (cytochrome b-c1 complex, complex III, CIII) and cytochrome c oxidase (complex IV, CIV), that cooperate to transfer electrons derived from NADH and succinate to molecular oxygen, creating an electrochemical gradient over the inner membrane that drives transmembrane transport and the ATP synthase. Cytochrome c oxidase is the component of the respiratory chain that catalyzes the reduction of oxygen to water. Electrons originating from reduced cytochrome c in the intermembrane space (IMS) are transferred via the dinuclear copper A center (CU(A)) of subunit 2 and heme A of subunit 1 to the active site in subunit 1, a binuclear center (BNC) formed by heme A3 and copper B (CU(B)). The BNC reduces molecular oxygen to 2 water molecules using 4 electrons from cytochrome c in the IMS and 4 protons from the mitochondrial matrix. This is Cytochrome c oxidase subunit 1 (MT-CO1) from Theileria parva (East coast fever infection agent).